The following is a 318-amino-acid chain: Acetyl-coenzyme A carboxylase carboxyl transferase subunit alpha (318 aa).

Residues Lys38 to Ala292 enclose the CoA carboxyltransferase C-terminal domain.

Belongs to the AccA family. Acetyl-CoA carboxylase is a heterohexamer composed of biotin carboxyl carrier protein (AccB), biotin carboxylase (AccC) and two subunits each of ACCase subunit alpha (AccA) and ACCase subunit beta (AccD).

The protein localises to the cytoplasm. The catalysed reaction is N(6)-carboxybiotinyl-L-lysyl-[protein] + acetyl-CoA = N(6)-biotinyl-L-lysyl-[protein] + malonyl-CoA. It functions in the pathway lipid metabolism; malonyl-CoA biosynthesis; malonyl-CoA from acetyl-CoA: step 1/1. Its function is as follows. Component of the acetyl coenzyme A carboxylase (ACC) complex. First, biotin carboxylase catalyzes the carboxylation of biotin on its carrier protein (BCCP) and then the CO(2) group is transferred by the carboxyltransferase to acetyl-CoA to form malonyl-CoA. The sequence is that of Acetyl-coenzyme A carboxylase carboxyl transferase subunit alpha from Listeria innocua serovar 6a (strain ATCC BAA-680 / CLIP 11262).